The sequence spans 348 residues: UDP-3-O-acylglucosamine N-acyltransferase (348 aa).

His-248 acts as the Proton acceptor in catalysis.

This sequence belongs to the transferase hexapeptide repeat family. LpxD subfamily. As to quaternary structure, homotrimer.

The enzyme catalyses a UDP-3-O-[(3R)-3-hydroxyacyl]-alpha-D-glucosamine + a (3R)-hydroxyacyl-[ACP] = a UDP-2-N,3-O-bis[(3R)-3-hydroxyacyl]-alpha-D-glucosamine + holo-[ACP] + H(+). It participates in bacterial outer membrane biogenesis; LPS lipid A biosynthesis. Functionally, catalyzes the N-acylation of UDP-3-O-acylglucosamine using 3-hydroxyacyl-ACP as the acyl donor. Is involved in the biosynthesis of lipid A, a phosphorylated glycolipid that anchors the lipopolysaccharide to the outer membrane of the cell. This is UDP-3-O-acylglucosamine N-acyltransferase from Rippkaea orientalis (strain PCC 8801 / RF-1) (Cyanothece sp. (strain PCC 8801)).